The sequence spans 311 residues: E3 ubiquitin-protein ligase RNF126 (311 aa).

Position 2 is an N-acetylalanine (A2). Residue S5 is modified to Phosphoserine. Residues 5–100 (SPHPGRYFCH…FEIPTFPPGA (96 aa)) are required for interaction with BAG6. Zn(2+)-binding residues include C13, C16, C29, and C32. The C4-type zinc-finger motif lies at 13 to 32 (CHCCSVEIVPRLPDYICPRC). Disordered stretches follow at residues 42-64 (EETR…SRPP) and 94-132 (PTFP…ARLT). Residues 47–61 (TENGSAPSTAPTDQS) are compositionally biased toward polar residues. Residues 103–116 (DDGRDPESRRERDH) show a composition bias toward basic and acidic residues. Residues 117–132 (PSRHRYGARQPRARLT) are compositionally biased toward basic residues. The sufficient for interaction with AICDA stretch occupies residues 200-304 (TGPPPADKEK…SSSSSSSPSN (105 aa)). The RING-type zinc-finger motif lies at 229 to 270 (CPVCKDDYALGERVRQLPCNHLFHDGCIVPWLEQHDSCPVCR). Positions 277 to 311 (NTATNPPGLTGVSFSSSSSSSSSSSPSNENATSNS) are disordered. Residues 289 to 311 (SFSSSSSSSSSSSPSNENATSNS) are compositionally biased toward low complexity.

In terms of assembly, interacts with CCDC50, EGFR, FLT3 and SCAMP3. Interacts with BAG6 (via ubiquitin-like domain); required for BAG6-dependent ubiquitination of proteins mislocalized to the cytosol. Interacts with CDKN1A. Interacts with AICDA. In terms of processing, ubiquitinated. May undergo autoubiquitination. Highly expressed in liver and testis.

Its subcellular location is the cytoplasm. It localises to the nucleus. It carries out the reaction S-ubiquitinyl-[E2 ubiquitin-conjugating enzyme]-L-cysteine + [acceptor protein]-L-lysine = [E2 ubiquitin-conjugating enzyme]-L-cysteine + N(6)-ubiquitinyl-[acceptor protein]-L-lysine.. It functions in the pathway protein modification; protein ubiquitination. In terms of biological role, E3 ubiquitin-protein ligase that mediates ubiquitination oF target proteins. Depending on the associated E2 ligase, mediates 'Lys-27'-, 'Lys-29'-, 'Lys-48'- and/or 'Lys-63'-linked polyubiquitination of substrates. Part of a BAG6-dependent quality control process ensuring that proteins of the secretory pathway that are mislocalized to the cytosol are degraded by the proteasome. Probably acts by providing the ubiquitin ligase activity associated with the BAG6 complex and be responsible for ubiquitination of the hydrophobic mislocalized proteins and their targeting to the proteasome. May also play a role in the endosomal recycling of IGF2R, the cation-independent mannose-6-phosphate receptor. May play a role in the endosomal sorting and degradation of several membrane receptors including EGFR, FLT3, MET and CXCR4, by mediating their ubiquitination. By ubiquitinating CDKN1A/p21 and targeting it for degradation, may also promote cell proliferation. May monoubiquitinate AICDA. Acts as a regulator of DNA repair by mediating 'Lys-27'- and 'Lys-29'-linked polyubiquitination of MRE11, thereby promoting the exonuclease activity of MRE11. This Homo sapiens (Human) protein is E3 ubiquitin-protein ligase RNF126.